The following is a 111-amino-acid chain: UPF0122 protein LACR_1522 (111 aa).

This sequence belongs to the UPF0122 family.

Might take part in the signal recognition particle (SRP) pathway. This is inferred from the conservation of its genetic proximity to ftsY/ffh. May be a regulatory protein. The chain is UPF0122 protein LACR_1522 from Lactococcus lactis subsp. cremoris (strain SK11).